We begin with the raw amino-acid sequence, 305 residues long: Serine/threonine-protein kinase 16 (305 aa).

Gly-2 carries N-myristoyl glycine lipidation. 2 S-palmitoyl cysteine lipidation sites follow: Cys-6 and Cys-8. The Protein kinase domain occupies Tyr-20–Leu-293. ATP is bound by residues Leu-26 to Val-34 and Lys-49. Residue Asp-148 is the Proton acceptor of the active site. The segment at Asp-166–Glu-202 is activation loop. A Phosphothreonine; by autocatalysis modification is found at Thr-185. Phosphoserine; by autocatalysis is present on Ser-197. Tyr-198 bears the Phosphotyrosine; by autocatalysis mark.

Belongs to the protein kinase superfamily. Ser/Thr protein kinase family. In terms of assembly, monomer. Interacts with DRG1 (via its N-terminal); the interaction phosphorylates DRG1. In terms of processing, mainly autophosphorylated on serine/threonine residues. Also autophosphorylated on Tyr-198. It is uncertain whether palmitoylation is on Cys-6 and/or Cys-8. Ubiquitously expressed at very low levels.

It is found in the cytoplasm. The protein localises to the perinuclear region. Its subcellular location is the membrane. It carries out the reaction L-seryl-[protein] + ATP = O-phospho-L-seryl-[protein] + ADP + H(+). The catalysed reaction is L-threonyl-[protein] + ATP = O-phospho-L-threonyl-[protein] + ADP + H(+). It catalyses the reaction L-tyrosyl-[protein] + ATP = O-phospho-L-tyrosyl-[protein] + ADP + H(+). Functionally, membrane-associated protein kinase that phosphorylates on serine and threonine residues. In vitro substrates include DRG1, ENO1 and EIF4EBP1. Also autophosphorylates. May be involved in secretory vesicle trafficking or intracellular signaling. May have a role in regulating stromal-epithelial interactions that occur during ductal morphogenesis in the mammary gland. May be involved in TGF-beta signaling. Able to autophosphorylate on Tyr residue; it is however unclear whether it has tyrosine-protein kinase toward other proteins. This Homo sapiens (Human) protein is Serine/threonine-protein kinase 16 (STK16).